The following is a 140-amino-acid chain: Protein ApaG (140 aa).

In terms of domain architecture, ApaG spans 13–137 (EARTRDIVVR…FSLHLPGAAM (125 aa)).

This is Protein ApaG from Caulobacter vibrioides (strain ATCC 19089 / CIP 103742 / CB 15) (Caulobacter crescentus).